The following is a 101-amino-acid chain: Protein translation factor SUI1 homolog (101 aa).

Belongs to the SUI1 family.

The protein is Protein translation factor SUI1 homolog of Methanoregula boonei (strain DSM 21154 / JCM 14090 / 6A8).